Reading from the N-terminus, the 156-residue chain is Ribosomal RNA large subunit methyltransferase H (156 aa).

S-adenosyl-L-methionine contacts are provided by residues Leu-73, Gly-104, and 123–128 (LSALTL).

It belongs to the RNA methyltransferase RlmH family. In terms of assembly, homodimer.

It localises to the cytoplasm. The enzyme catalyses pseudouridine(1915) in 23S rRNA + S-adenosyl-L-methionine = N(3)-methylpseudouridine(1915) in 23S rRNA + S-adenosyl-L-homocysteine + H(+). Specifically methylates the pseudouridine at position 1915 (m3Psi1915) in 23S rRNA. The sequence is that of Ribosomal RNA large subunit methyltransferase H from Shewanella denitrificans (strain OS217 / ATCC BAA-1090 / DSM 15013).